Here is a 335-residue protein sequence, read N- to C-terminus: MVREGEERIGNRVSLGVIGVSYRETTLQQREQVLHILQQAQGSFRLEVFQEEKDYVLLATCHRVELYSVAPAELFDSLAQEIELLGVSPYFYRNQDCFAHLFCVAGGLDSLVLGETEIQGQVKRAYLQAAREQKLSFALHFLFQKALKEGKVFRAKGGAPYAEITIPILVDQELRRRQIDKKASLLFIGYSEINRSVAYHLQRQGFSCITFCSRQQLPTLSMRQVVREELCFQDPYRVVFLGSSELQYALPHSLWESIWDIPDRIVFDFAVPRALPSHTVFPHRYVDMDQISDWLREHRKEVNSAHLHSLREVAYRYWNSLNQRLERRDCVGANA.

Substrate is bound by residues 60–63 (TCHR), Ser110, 115–117 (ETE), and Gln121. The active-site Nucleophile is Cys61. Residue 189-194 (GYSEIN) coordinates NADP(+).

The protein belongs to the glutamyl-tRNA reductase family. Homodimer.

The catalysed reaction is (S)-4-amino-5-oxopentanoate + tRNA(Glu) + NADP(+) = L-glutamyl-tRNA(Glu) + NADPH + H(+). It participates in porphyrin-containing compound metabolism; protoporphyrin-IX biosynthesis; 5-aminolevulinate from L-glutamyl-tRNA(Glu): step 1/2. Functionally, catalyzes the NADPH-dependent reduction of glutamyl-tRNA(Glu) to glutamate 1-semialdehyde (GSA). The polypeptide is Glutamyl-tRNA reductase (Chlamydia trachomatis serovar A (strain ATCC VR-571B / DSM 19440 / HAR-13)).